Consider the following 897-residue polypeptide: Chromodomain-helicase-DNA-binding protein 1-like (897 aa).

R9 is modified (omega-N-methylarginine). In terms of domain architecture, Helicase ATP-binding spans 58–223; sequence AQRFHCQNGC…YSLLSFVEPD (166 aa). An ATP-binding site is contributed by 71 to 78; it reads DEMGLGKT. Positions 174–177 match the DEAH box motif; sequence DEAH. One can recognise a Helicase C-terminal domain in the interval 351-513; that stretch reads LLDKLLAFLY…QKPAADADLQ (163 aa). S540, S607, S618, S628, and S636 each carry phosphoserine. Positions 601 to 635 are regulatory linker segment (RLS); it reads TLLEKASQEGRSLRNKGSVLIPGLVEGSTKRKRVL. Positions 615–673 are required for ATPase activity; that stretch reads NKGSVLIPGLVEGSTKRKRVLSPEELEDRQKKRQEAAAKRRRLIEEKKRQKEEAEHKKK. Disordered regions lie at residues 628–654 and 687–711; these read STKR…AAKR and LPSE…DYQD. Residues 638-675 are a coiled coil; that stretch reads EELEDRQKKRQEAAAKRRRLIEEKKRQKEEAEHKKKMA. Basic and acidic residues predominate over residues 642 to 654; the sequence is DRQKKRQEAAAKR. Residues 690–711 show a composition bias toward acidic residues; sequence EESEPEDLENGEESSAELDYQD. Residues 704–897 form the Macro domain; that stretch reads SAELDYQDPD…SSSSSRQLVP (194 aa). S891 carries the post-translational modification Phosphoserine.

This sequence belongs to the SNF2/RAD54 helicase family. Interacts with nucleosomes; interacts with the acidic patch of histones. Interacts (via macro domain) with PARP1; interacts only when PARP1 is poly-ADP-ribosylated (PARylated). Interacts with CIAO1. In terms of tissue distribution, frequently overexpressed in hepatomacellular carcinomas.

Its subcellular location is the nucleus. The protein localises to the chromosome. The catalysed reaction is ATP + H2O = ADP + phosphate + H(+). With respect to regulation, adopts an inactive conformation in absence of DNA damage. Binding to poly-ADP-ribosylated histones activates the ATP-dependent chromatin remodeler activity. Its function is as follows. ATP-dependent chromatin remodeler that mediates chromatin-remodeling following DNA damage. Recruited to DNA damage sites through interaction with poly-ADP-ribose: specifically recognizes and binds histones that are poly-ADP-ribosylated on serine residues in response to DNA damage. Poly-ADP-ribose-binding activates the ATP-dependent chromatin remodeler activity, thereby regulating chromatin during DNA repair. Catalyzes nucleosome sliding away from DNA breaks in an ATP-dependent manner. Chromatin remodeling activity promotes PARP2 removal from chromatin. The sequence is that of Chromodomain-helicase-DNA-binding protein 1-like from Homo sapiens (Human).